Here is a 141-residue protein sequence, read N- to C-terminus: Arsenate reductase (141 aa).

C12 acts as the Nucleophile; cysteine thioarsenate intermediate in catalysis.

Belongs to the ArsC family. Monomer in solution.

The catalysed reaction is [glutaredoxin]-dithiol + arsenate + glutathione + H(+) = glutathionyl-S-S-[glutaredoxin] + arsenite + H2O. With respect to regulation, inhibited by the thiol reagents iodoacetate (IAA) and N-ethylmaleimide (NEM). Activity is rapidly inactivated by the histidine-modifying reagent diethylpyrocarbonate (DEPC). Involved in resistance to arsenate. Catalyzes the reduction of arsenate [As(V)] to arsenite [As(III)]. The resulting arsenite is then extruded from the cell via the ArsAB transport system. The chain is Arsenate reductase from Escherichia coli.